A 559-amino-acid chain; its full sequence is Germacrene A synthase (559 aa).

Mg(2+)-binding residues include Asp312, Asp316, Asp456, Thr460, and Glu464. Positions 312–316 match the DDXXD motif motif; sequence DDTYD.

The protein belongs to the terpene synthase family. In terms of assembly, monomer. Mg(2+) is required as a cofactor. As to expression, expressed in glandular trichomes of all aerial tissues, with highest levels in tissues accumulating parthenolide (e.g. flowers and, to some extent, leaves).

It carries out the reaction (2E,6E)-farnesyl diphosphate = (+)-(R)-germacrene A + diphosphate. The protein operates within secondary metabolite biosynthesis; terpenoid biosynthesis. In terms of biological role, sesquiterpene synthase involved in germacrene A biosynthesis. Germacrene A is a precursor of several sesquiterpene lactones. In Tanacetum parthenium (Feverfew), this protein is Germacrene A synthase.